The sequence spans 263 residues: MEDETELCFRSNKVTRLEMFVCTYGGKISSLACSHMELIKLLQIAEPVKALNCNFGHQCLPGYESLIKTPKKSKNMLRRPRKTEGDGTCFNSAIEASILFKDKMYKLKCFPSTGEIQVPGVIFPDFEDGKNIIQQWVEFLQHQPIEKKVQIIEFKTIMINFKFQINSVSPRVIIHLKKFAALLEQIPTPYPIREIKPPLEDSKVSAKFMVSPGKKVRINVFLKGKINILGCNTKESAETIYAFLKDLISVHWQEILCVLPVPD.

It belongs to the asfivirus B263R family.

In terms of biological role, putative TATA-binding protein. The sequence is that of Putative TATA-binding protein pB263R from African swine fever virus (isolate Pig/Kenya/KEN-50/1950) (ASFV).